The chain runs to 155 residues: 17.3 kDa class II heat shock protein (155 aa).

In terms of domain architecture, sHSP spans D39 to A155.

It belongs to the small heat shock protein (HSP20) family.

The protein resides in the cytoplasm. This Solanum peruvianum (Peruvian tomato) protein is 17.3 kDa class II heat shock protein.